We begin with the raw amino-acid sequence, 291 residues long: Elongation factor Ts (291 aa).

Residues 79–82 (TDFV) form an involved in Mg(2+) ion dislocation from EF-Tu region.

This sequence belongs to the EF-Ts family.

It is found in the cytoplasm. In terms of biological role, associates with the EF-Tu.GDP complex and induces the exchange of GDP to GTP. It remains bound to the aminoacyl-tRNA.EF-Tu.GTP complex up to the GTP hydrolysis stage on the ribosome. The polypeptide is Elongation factor Ts (Anaplasma marginale (strain Florida)).